A 63-amino-acid chain; its full sequence is LTCVTGKSIGGISTEECAAGQKICFKKWTKMGPKLYDVSRGCTATCPKADEYGCVKCCKTDRN.

Disulfide bonds link Cys3–Cys24, Cys17–Cys42, and Cys46–Cys57.

The protein belongs to the three-finger toxin family. Short-chain subfamily. Aminergic toxin sub-subfamily. In terms of assembly, heterodimer of C9S3 chain 1 and chain 2 (AC P01409); disulfide-linked. As to expression, expressed by the venom gland.

The protein localises to the secreted. In terms of biological role, this protein shows a synergetic toxic effect in that it enhances the toxicity of other toxins. This is Synergistic-type venom protein C9S3, chain 1 from Dendroaspis angusticeps (Eastern green mamba).